Consider the following 289-residue polypeptide: Zinc finger matrin-type protein 3 (289 aa).

Residues 1–59 (MILLQHAGLPPPKRPSSSPPMSVAARSTGALQLPPQKPFGQEASLPLAGEEEPPKGGEQ) form a disordered region. Positions 9-18 (LPPPKRPSSS) are enriched in pro residues. Matrin-type zinc fingers lie at residues 70 to 100 (LYCKLCNVTLNSAQQAQAHYQGKNHGKKLRN) and 147 to 177 (DYCKLCDASFSSPAVAQAHYQGKNHAKRLRL). A compositionally biased stretch (polar residues) spans 180-191 (AQSNSFSDSSEV). Residues 180–200 (AQSNSFSDSSEVGQRRTRKEG) are disordered. Residues 246–276 (FYCSMCNVGAGEEVEFRQHLESKQHKSKVSE) form a Matrin-type 3 zinc finger.

In terms of assembly, interacts with dsRNA.

It localises to the nucleus. Its subcellular location is the nucleolus. In terms of biological role, acts as a bona fide target gene of p53/TP53. May play a role in the TP53-dependent growth regulatory pathway. May contribute to TP53-mediated apoptosis by regulation of TP53 expression and translocation to the nucleus and nucleolus. The sequence is that of Zinc finger matrin-type protein 3 from Bos taurus (Bovine).